We begin with the raw amino-acid sequence, 472 residues long: Adenosylhomocysteinase (472 aa).

Thr63, Asp138, and Glu198 together coordinate substrate. 199–201 (TTT) is a binding site for NAD(+). The substrate site is built by Lys228 and Asp232. NAD(+)-binding positions include Asn233, 262-267 (GYGDVG), Glu285, Asn320, 341-343 (IGH), and Asn386.

It belongs to the adenosylhomocysteinase family. It depends on NAD(+) as a cofactor.

The protein localises to the cytoplasm. The enzyme catalyses S-adenosyl-L-homocysteine + H2O = L-homocysteine + adenosine. Its pathway is amino-acid biosynthesis; L-homocysteine biosynthesis; L-homocysteine from S-adenosyl-L-homocysteine: step 1/1. In terms of biological role, may play a key role in the regulation of the intracellular concentration of adenosylhomocysteine. In Methylococcus capsulatus (strain ATCC 33009 / NCIMB 11132 / Bath), this protein is Adenosylhomocysteinase.